The following is a 113-amino-acid chain: Hydrogenase maturation factor HypA (113 aa).

His-2 is a Ni(2+) binding site. Zn(2+) is bound by residues Cys-73, Cys-76, Cys-89, and Cys-92.

It belongs to the HypA/HybF family.

Its function is as follows. Involved in the maturation of [NiFe] hydrogenases. Required for nickel insertion into the metal center of the hydrogenase. This is Hydrogenase maturation factor HypA from Legionella pneumophila subsp. pneumophila (strain Philadelphia 1 / ATCC 33152 / DSM 7513).